Here is a 696-residue protein sequence, read N- to C-terminus: Golgi integral membrane protein 4 (696 aa).

G2 is lipidated: N-myristoyl glycine. At 2 to 12 (GNGMCSRKQKR) the chain is on the cytoplasmic side. Residues 13–33 (IFQTLLLLTVVFGFLYGAMLY) form a helical; Signal-anchor for type II membrane protein membrane-spanning segment. Over 34-696 (YELQTQLRKA…AEKSHRRAEM (663 aa)) the chain is Lumenal. A coiled-coil region spans residues 35–244 (ELQTQLRKAE…KQLKDTLNRI (210 aa)). Positions 38 to 107 (TQLRKAEAVA…ETLNKGRQDS (70 aa)) are golgi targeting. The tract at residues 80–175 (LEHKKAKEDF…QELSKLKETV (96 aa)) is endosome targeting. Disordered stretches follow at residues 122–145 (KSQHEELKKQHSDLEEEHRKQGED), 244–391 (IPSL…HARA), and 427–696 (LREH…RAEM). The segment covering 123-145 (SQHEELKKQHSDLEEEHRKQGED) has biased composition (basic and acidic residues). Residues 176–248 (YNLREENRQL…DTLNRIPSLR (73 aa)) form a golgi targeting region. Positions 254–269 (EQQNVTQVAHSPQGYN) are enriched in polar residues. The N-linked (GlcNAc...) asparagine glycan is linked to N257. Composition is skewed to basic and acidic residues over residues 271 to 281 (AREKPTREVQE), 298 to 313 (RAEDTKLYAPTHKEAE), 324 to 343 (EVERREPEEHQVEEEHRKAL), 355 to 364 (EHLEEEHDPS), and 370 to 380 (REWKEQHEQRE). The residue at position 364 (S364) is a Phosphoserine. Over residues 436 to 453 (QQRLQGHLLRQQEQQQQQ) the composition is skewed to low complexity. Composition is skewed to basic and acidic residues over residues 464 to 476 (AELEEGRPQHQEQ) and 505 to 545 (AYER…RAAV). At S538 the chain carries Phosphoserine. A compositionally biased stretch (acidic residues) spans 604 to 626 (QQEDNVDEQYQEEAEEEVQEDLT). Y613 is subject to Phosphotyrosine. T626 carries the post-translational modification Phosphothreonine. Composition is skewed to basic and acidic residues over residues 627 to 638 (EEKKRELEHNAE) and 661 to 672 (RDDNRPKGREEH). Y673 carries the phosphotyrosine modification. The segment covering 673–683 (YEEEEEEEEDG) has biased composition (acidic residues).

Belongs to the GOLIM4 family. Phosphorylated probably by c-AMP-dependent kinases in its lumenal part. In terms of processing, O-glycosylated; modified by sialic acid residues. Post-translationally, N-glycosylated; N-glycans are probably of the complex type and modified by sialic acid residues.

It localises to the golgi apparatus. It is found in the golgi stack membrane. The protein localises to the endosome membrane. Its subcellular location is the membrane. Functionally, plays a role in endosome to Golgi protein trafficking; mediates protein transport along the late endosome-bypass pathway from the early endosome to the Golgi. This chain is Golgi integral membrane protein 4 (GOLIM4), found in Homo sapiens (Human).